Consider the following 497-residue polypeptide: Putative endothelial lipase (497 aa).

The first 23 residues, M1 to A23, serve as a signal peptide directing secretion. C73 and C86 are oxidised to a cystine. N-linked (GlcNAc...) asparagine glycosylation is found at N89 and N145. S178 acts as the Nucleophile in catalysis. The active-site Charge relay system is the D202. C262 and C282 are oxidised to a cystine. H284 functions as the Charge relay system in the catalytic mechanism. Cystine bridges form between C307–C326 and C318–C321. Position 335-347 (K335–K347) interacts with heparin. Residues F357 to H492 form the PLAT domain. N403 carries an N-linked (GlcNAc...) asparagine glycan.

This sequence belongs to the AB hydrolase superfamily. Lipase family. As to quaternary structure, head to tail homodimer. As to expression, expressed by the venom gland.

The protein resides in the secreted. The catalysed reaction is a triacylglycerol + H2O = a diacylglycerol + a fatty acid + H(+). Its activity is regulated as follows. Inhibited by serum. Has phospholipase and triglyceride lipase activities. In Crotalus adamanteus (Eastern diamondback rattlesnake), this protein is Putative endothelial lipase.